A 130-amino-acid chain; its full sequence is Small ribosomal subunit protein uS9 (130 aa).

This sequence belongs to the universal ribosomal protein uS9 family.

The polypeptide is Small ribosomal subunit protein uS9 (Desulfovibrio desulfuricans (strain ATCC 27774 / DSM 6949 / MB)).